The chain runs to 869 residues: Probable beta-glucosidase F (869 aa).

A signal peptide spans Met-1–Ser-19. 2 N-linked (GlcNAc...) asparagine glycosylation sites follow: Asn-77 and Asn-261. The active site involves Asp-289. Residues Asn-332, Asn-364, Asn-399, and Asn-478 are each glycosylated (N-linked (GlcNAc...) asparagine). The disordered stretch occupies residues Ser-677–Pro-697. Residues Pro-681–Thr-691 show a composition bias toward pro residues. Asn-728 carries an N-linked (GlcNAc...) asparagine glycan.

The protein belongs to the glycosyl hydrolase 3 family.

It is found in the secreted. The enzyme catalyses Hydrolysis of terminal, non-reducing beta-D-glucosyl residues with release of beta-D-glucose.. It participates in glycan metabolism; cellulose degradation. Functionally, beta-glucosidases are one of a number of cellulolytic enzymes involved in the degradation of cellulosic biomass. Catalyzes the last step releasing glucose from the inhibitory cellobiose. This Aspergillus fumigatus (strain CBS 144.89 / FGSC A1163 / CEA10) (Neosartorya fumigata) protein is Probable beta-glucosidase F (bglF).